A 164-amino-acid polypeptide reads, in one-letter code: Cytochrome c-type biogenesis protein CcmE (164 aa).

Over 1 to 7 (MTRKQRR) the chain is Cytoplasmic. The helical; Signal-anchor for type II membrane protein transmembrane segment at 8–28 (LLMIGGAGVVLVVAVGLVLNA) threads the bilayer. At 29-164 (MRGSIVFFST…ASADAAGPSR (136 aa)) the chain is on the periplasmic side. Heme contacts are provided by H122 and Y126. Residues 137 to 149 (KQGHWKDDYEKKP) show a composition bias toward basic and acidic residues. A disordered region spans residues 137-164 (KQGHWKDDYEKKPPGAPGASADAAGPSR). A compositionally biased stretch (low complexity) spans 153-164 (PGASADAAGPSR).

This sequence belongs to the CcmE/CycJ family.

Its subcellular location is the cell inner membrane. In terms of biological role, heme chaperone required for the biogenesis of c-type cytochromes. Transiently binds heme delivered by CcmC and transfers the heme to apo-cytochromes in a process facilitated by CcmF and CcmH. This Rhodopseudomonas palustris (strain BisB5) protein is Cytochrome c-type biogenesis protein CcmE.